Here is a 257-residue protein sequence, read N- to C-terminus: Putative hydro-lyase Bcep18194_B2576 (257 aa).

Belongs to the D-glutamate cyclase family.

The polypeptide is Putative hydro-lyase Bcep18194_B2576 (Burkholderia lata (strain ATCC 17760 / DSM 23089 / LMG 22485 / NCIMB 9086 / R18194 / 383)).